An 880-amino-acid chain; its full sequence is Leucine--tRNA ligase (880 aa).

Positions 46-56 (PYPSGALHMGH) match the 'HIGH' region motif. Residues 638 to 642 (KMSKS) carry the 'KMSKS' region motif. K641 provides a ligand contact to ATP.

The protein belongs to the class-I aminoacyl-tRNA synthetase family.

It localises to the cytoplasm. It carries out the reaction tRNA(Leu) + L-leucine + ATP = L-leucyl-tRNA(Leu) + AMP + diphosphate. The polypeptide is Leucine--tRNA ligase (Stenotrophomonas maltophilia (strain K279a)).